The following is a 421-amino-acid chain: Heterogeneous nuclear ribonucleoprotein 27C (421 aa).

2 RRM domains span residues 7-88 (GKLF…RTLQ) and 96-173 (YKVF…KAEP). Disordered stretches follow at residues 171 to 191 (AEPRDGSGGQNSNNSTVGGAY) and 240 to 373 (GTSP…SEYD). Serine 177 carries the phosphoserine modification. Residues 240 to 250 (GTSPQQQQYGY) show a composition bias toward polar residues. A compositionally biased stretch (pro residues) spans 264 to 273 (PPGPQGPPPQ). Positions 275–284 (SNYAGPQQTQ) are enriched in polar residues. Residues 293–302 (NSTSTGAPSG) show a composition bias toward low complexity. Residues serine 366, serine 368, and serine 370 each carry the phosphoserine modification. Tyrosine 372 carries the post-translational modification Phosphotyrosine. Serine 379 carries the phosphoserine modification. The tract at residues 392–421 (EGASNYGAGPRSAYGNDSSTQPPYATSQAV) is disordered. The span at 406-421 (GNDSSTQPPYATSQAV) shows a compositional bias: polar residues.

As to quaternary structure, interacts with sqd; the interaction is RNA-dependent and may be specific for sqd isoform A/sqdA. Interacts with otu; the interaction is RNA-independent.

The protein localises to the nucleus. It localises to the cytoplasm. This protein is a component of ribonucleosomes. Could be needed to organize a concentration gradient of a dorsalizing morphogen (Dm) originating in the germinal vesicle. Interacts with grk mRNA (via 3' UTR) and involved in its localization to the dorsal anterior region of the oocyte during dorsal-ventral axis determination; may function as a ribonuclear protein complex together with sqd and otu. Required for polytene chromosome dispersal in nurse cells during oogenesis. May be involved in the regulation of splicing. The sequence is that of Heterogeneous nuclear ribonucleoprotein 27C from Drosophila melanogaster (Fruit fly).